The primary structure comprises 146 residues: D-aminoacyl-tRNA deacylase (146 aa).

Residues 137-138 carry the Gly-cisPro motif, important for rejection of L-amino acids motif; the sequence is GP.

Belongs to the DTD family. In terms of assembly, homodimer.

It is found in the cytoplasm. The enzyme catalyses glycyl-tRNA(Ala) + H2O = tRNA(Ala) + glycine + H(+). The catalysed reaction is a D-aminoacyl-tRNA + H2O = a tRNA + a D-alpha-amino acid + H(+). Its function is as follows. An aminoacyl-tRNA editing enzyme that deacylates mischarged D-aminoacyl-tRNAs. Also deacylates mischarged glycyl-tRNA(Ala), protecting cells against glycine mischarging by AlaRS. Acts via tRNA-based rather than protein-based catalysis; rejects L-amino acids rather than detecting D-amino acids in the active site. By recycling D-aminoacyl-tRNA to D-amino acids and free tRNA molecules, this enzyme counteracts the toxicity associated with the formation of D-aminoacyl-tRNA entities in vivo and helps enforce protein L-homochirality. In Bacillus thuringiensis (strain Al Hakam), this protein is D-aminoacyl-tRNA deacylase.